Reading from the N-terminus, the 90-residue chain is MSSSISAPEGIINPPIDELLEATDSKYSLVIYAAKRARQINAYYSQLGEGLLEYVGPLVDTHVHEKPLSIALREINAGLLTSEAIEGPAQ.

It belongs to the RNA polymerase subunit omega family. As to quaternary structure, the RNAP catalytic core consists of 2 alpha, 1 beta, 1 beta' and 1 omega subunit. When a sigma factor is associated with the core the holoenzyme is formed, which can initiate transcription.

The enzyme catalyses RNA(n) + a ribonucleoside 5'-triphosphate = RNA(n+1) + diphosphate. Functionally, promotes RNA polymerase assembly. Latches the N- and C-terminal regions of the beta' subunit thereby facilitating its interaction with the beta and alpha subunits. This is DNA-directed RNA polymerase subunit omega (rpoZ) from Streptomyces coelicolor (strain ATCC BAA-471 / A3(2) / M145).